Here is a 98-residue protein sequence, read N- to C-terminus: Cell division topological specificity factor (98 aa).

It belongs to the MinE family.

Its function is as follows. Prevents the cell division inhibition by proteins MinC and MinD at internal division sites while permitting inhibition at polar sites. This ensures cell division at the proper site by restricting the formation of a division septum at the midpoint of the long axis of the cell. This chain is Cell division topological specificity factor, found in Methylorubrum populi (strain ATCC BAA-705 / NCIMB 13946 / BJ001) (Methylobacterium populi).